A 297-amino-acid polypeptide reads, in one-letter code: Ribosomal protein L11 methyltransferase (297 aa).

Residues Thr-150, Gly-171, Asp-193, and Asn-233 each contribute to the S-adenosyl-L-methionine site.

The protein belongs to the methyltransferase superfamily. PrmA family.

Its subcellular location is the cytoplasm. The enzyme catalyses L-lysyl-[protein] + 3 S-adenosyl-L-methionine = N(6),N(6),N(6)-trimethyl-L-lysyl-[protein] + 3 S-adenosyl-L-homocysteine + 3 H(+). Its function is as follows. Methylates ribosomal protein L11. In Laribacter hongkongensis (strain HLHK9), this protein is Ribosomal protein L11 methyltransferase.